A 292-amino-acid chain; its full sequence is Glycine--tRNA ligase alpha subunit (292 aa).

The protein belongs to the class-II aminoacyl-tRNA synthetase family. In terms of assembly, tetramer of two alpha and two beta subunits.

It is found in the cytoplasm. It catalyses the reaction tRNA(Gly) + glycine + ATP = glycyl-tRNA(Gly) + AMP + diphosphate. This Desulfovibrio desulfuricans (strain ATCC 27774 / DSM 6949 / MB) protein is Glycine--tRNA ligase alpha subunit.